A 476-amino-acid chain; its full sequence is Amidophosphoribosyltransferase (476 aa).

Residues 1-11 constitute a propeptide that is removed on maturation; it reads MLAEIKGLNEE. Cys-12 serves as the catalytic Nucleophile. One can recognise a Glutamine amidotransferase type-2 domain in the interval 12–231; the sequence is CGVFGIWGHE…PGEMLIINDE (220 aa). Cys-247 provides a ligand contact to [4Fe-4S] cluster. Residues Ser-294, Asp-356, and Asp-357 each coordinate Mg(2+). [4Fe-4S] cluster-binding residues include Cys-393, Cys-448, and Cys-451.

The protein in the C-terminal section; belongs to the purine/pyrimidine phosphoribosyltransferase family. As to quaternary structure, homotetramer. Requires Mg(2+) as cofactor. [4Fe-4S] cluster is required as a cofactor.

It carries out the reaction 5-phospho-beta-D-ribosylamine + L-glutamate + diphosphate = 5-phospho-alpha-D-ribose 1-diphosphate + L-glutamine + H2O. It participates in purine metabolism; IMP biosynthesis via de novo pathway; N(1)-(5-phospho-D-ribosyl)glycinamide from 5-phospho-alpha-D-ribose 1-diphosphate: step 1/2. Its activity is regulated as follows. Allosterically regulated; subject to end product regulation by purine nucleotides. Its function is as follows. Catalyzes the formation of phosphoribosylamine from phosphoribosylpyrophosphate (PRPP) and glutamine. The protein is Amidophosphoribosyltransferase of Bacillus subtilis (strain 168).